A 612-amino-acid polypeptide reads, in one-letter code: RNA polymerase sigma factor RpoD (612 aa).

Positions 191-206 (QQNNEEDEENNQEDHE) are enriched in acidic residues. Residues 191–210 (QQNNEEDEENNQEDHEDDHS) form a disordered region. The segment at 378–448 (MVEANLRLVI…TRSIADQART (71 aa)) is sigma-70 factor domain-2. The short motif at 402-405 (DLIQ) is the Interaction with polymerase core subunit RpoC element. A sigma-70 factor domain-3 region spans residues 457–533 (ETINKLNRIS…DTTLELPLDS (77 aa)). Residues 546–599 (VLSGLTAREAKVLRMRFGIDMNTDHTLEEVGKQFDVTRERIRQIEAKALRKLRH) form a sigma-70 factor domain-4 region. Residues 572-591 (LEEVGKQFDVTRERIRQIEA) constitute a DNA-binding region (H-T-H motif).

Belongs to the sigma-70 factor family. RpoD/SigA subfamily. As to quaternary structure, interacts transiently with the RNA polymerase catalytic core.

It is found in the cytoplasm. Its function is as follows. Sigma factors are initiation factors that promote the attachment of RNA polymerase to specific initiation sites and are then released. This sigma factor is the primary sigma factor during exponential growth. This Buchnera aphidicola subsp. Acyrthosiphon pisum (strain APS) (Acyrthosiphon pisum symbiotic bacterium) protein is RNA polymerase sigma factor RpoD.